The chain runs to 403 residues: MKTIDELLSEGVAGKRVFVRADLNVPLDGTTITDDGRIRAVVPTVKALADAGARVIVASHLGRPKGAPDPAFSLAPAAARLGELLGADVAFAEDTVGSSAEAVVTGLADGGVAVIENLRFNAGETSKDDAERAAFADKLAGLADVYVGDGFGAVHRKHASVFDLPKRLPHYAGYLIATEVGVLKKLTDEVKRPYVVALGGAKVSDKLAVIDQLLGKADRLLIGGGMAYTFLKAKGYEVGISLLQEDQIPAVKEYIERAEKNGVELVLPVDVLVAPEFPDLKTKAPANPTTVAADAIPADQEGLDIGPETRKLYASKLADAGTVFWNGPMGVFEHPDYAEGTKAVAQALVDAPGFTVVGGGDSAAAVRTLGFDENAFGHISTGGGASLEYLEGKTLPGLAALED.

Substrate contacts are provided by residues Asp-22 to Asn-24, Arg-37, His-60 to Arg-63, Arg-119, and Arg-156. Residues Lys-206, Gly-302, Glu-333, and Gly-359–Ser-362 contribute to the ATP site.

This sequence belongs to the phosphoglycerate kinase family. In terms of assembly, monomer.

The protein resides in the cytoplasm. It catalyses the reaction (2R)-3-phosphoglycerate + ATP = (2R)-3-phospho-glyceroyl phosphate + ADP. Its pathway is carbohydrate degradation; glycolysis; pyruvate from D-glyceraldehyde 3-phosphate: step 2/5. This is Phosphoglycerate kinase (pgk) from Streptomyces coelicolor (strain ATCC BAA-471 / A3(2) / M145).